Consider the following 453-residue polypeptide: Nuclear distribution protein nudF-2 (453 aa).

Residues 9-41 (QADELHRALIAYLTAANLPNTAAALREELNLSE) enclose the LisH domain. Positions 62–88 (SVVRLQKKIMDLESRNHILQSELDNAT) form a coiled coil. A disordered region spans residues 84–107 (LDNATPTSRQNKDPVAWLPRAPPR). WD repeat units follow at residues 112–153 (SHRD…RTIK), 155–195 (HTKA…KNIR), 199–239 (GHDH…CVKT), 242–281 (GHAEWVRDVCPSLDGKYILSTSDDYTSRLWDVTITNPEPK), 286–345 (GHEH…IKTL), 347–386 (GHDNWVRGLVFHPGGKYLLSVSDDKTLRCWDLTQEGKCVK), and 391–449 (AHGH…LNVR).

The protein belongs to the WD repeat LIS1/nudF family. Self-associates. Interacts with ro-11/nde1 and dynein.

It localises to the cytoplasm. The protein localises to the cytoskeleton. Its subcellular location is the spindle pole. In terms of biological role, positively regulates the activity of the minus-end directed microtubule motor protein dynein. May enhance dynein-mediated microtubule sliding by targeting dynein to the microtubule plus end. Required for nuclear migration during vegetative growth as well as development. Required for retrograde early endosome (EE) transport from the hyphal tip. Required for localization of dynein to the mitotic spindle poles. Recruits additional proteins to the dynein complex at SPBs. This Neurospora crassa (strain ATCC 24698 / 74-OR23-1A / CBS 708.71 / DSM 1257 / FGSC 987) protein is Nuclear distribution protein nudF-2 (nmp-1).